The chain runs to 166 residues: MSGKIGLYTGSFDPVTNGHMDMIKRASHLFEHVYVGIFNNPNKQSFFTFELRAQMLREAVCALPNVTVVSAEHGLAVDLARELSVTHLIRGLRNTADFDYEAGLEYFNHRLAPDIETIYLMANHDLQPISSSRIRELIAFRAPITGLVPQAVINQVEKMNENNKKI.

Ser-11 provides a ligand contact to substrate. Residues 11-12 (SF) and His-19 each bind ATP. Residues Lys-43, Ala-76, and Arg-90 each coordinate substrate. ATP is bound by residues 91-93 (GLR), Glu-101, and 126-132 (LQPISSS).

Belongs to the bacterial CoaD family. In terms of assembly, homohexamer. Mg(2+) is required as a cofactor.

It localises to the cytoplasm. The catalysed reaction is (R)-4'-phosphopantetheine + ATP + H(+) = 3'-dephospho-CoA + diphosphate. It functions in the pathway cofactor biosynthesis; coenzyme A biosynthesis; CoA from (R)-pantothenate: step 4/5. Its function is as follows. Reversibly transfers an adenylyl group from ATP to 4'-phosphopantetheine, yielding dephospho-CoA (dPCoA) and pyrophosphate. The polypeptide is Phosphopantetheine adenylyltransferase (Streptococcus equi subsp. zooepidemicus (strain MGCS10565)).